The primary structure comprises 301 residues: Probable enoyl-CoA hydratase 2, mitochondrial (301 aa).

A mitochondrion-targeting transit peptide spans 1–32; it reads MSFVKYLRRDNLLQLAGKPSLSRNYILQTCRT. Substrate is bound by residues 105–109 and G152; that span reads AGADL.

Belongs to the enoyl-CoA hydratase/isomerase family.

The protein localises to the mitochondrion. It carries out the reaction a (3S)-3-hydroxyacyl-CoA = a (2E)-enoyl-CoA + H2O. The catalysed reaction is a 4-saturated-(3S)-3-hydroxyacyl-CoA = a (3E)-enoyl-CoA + H2O. Its pathway is lipid metabolism; fatty acid beta-oxidation. Functionally, straight-chain enoyl-CoA thioesters from C4 up to at least C16 are processed, although with decreasing catalytic rate. The sequence is that of Probable enoyl-CoA hydratase 2, mitochondrial from Arabidopsis thaliana (Mouse-ear cress).